A 73-amino-acid chain; its full sequence is Putative membrane protein insertion efficiency factor (73 aa).

This sequence belongs to the UPF0161 family.

Its subcellular location is the cell inner membrane. Functionally, could be involved in insertion of integral membrane proteins into the membrane. This is Putative membrane protein insertion efficiency factor from Treponema denticola (strain ATCC 35405 / DSM 14222 / CIP 103919 / JCM 8153 / KCTC 15104).